We begin with the raw amino-acid sequence, 226 residues long: MYNIIFLGPPGSGKGTQAHLISTKYGISNISAGEILKHALSVTKFHFNFNTDNMLNQINSGNLVDDELIIPLIIKRIRQDDCKKGFILDGFPRTIGQAIAIEQNKIAIDFVIEFNISDSAIINRIVGRQVHIKSGRTYHIKFNPPKLDGIDDITGEKLVIRADDNAQVILQRLNQYRKYTIFLSDYYQKQSQQGNMRYFIINGNQEITKIYKELINIFNFHIFKMN.

Residue 11–16 participates in ATP binding; the sequence is GSGKGT. Positions 31–64 are NMP; the sequence is SAGEILKHALSVTKFHFNFNTDNMLNQINSGNLV. AMP contacts are provided by residues 62–64, 90–93, and Q97; these read NLV and GFPR. The segment at 127–164 is LID; that stretch reads GRQVHIKSGRTYHIKFNPPKLDGIDDITGEKLVIRADD. Residues R128 and 137–138 each bind ATP; that span reads TY. Positions 161 and 172 each coordinate AMP. Q205 contacts ATP.

The protein belongs to the adenylate kinase family. In terms of assembly, monomer.

Its subcellular location is the cytoplasm. It carries out the reaction AMP + ATP = 2 ADP. The protein operates within purine metabolism; AMP biosynthesis via salvage pathway; AMP from ADP: step 1/1. Catalyzes the reversible transfer of the terminal phosphate group between ATP and AMP. Plays an important role in cellular energy homeostasis and in adenine nucleotide metabolism. This is Adenylate kinase from Blochmanniella floridana.